The primary structure comprises 473 residues: Inactive levansucrase (473 aa).

The signal sequence occupies residues 1–29 (MNIKKFAKQATVLTFTTALLAGGATQAFA).

Belongs to the glycosyl hydrolase 68 family.

Its subcellular location is the secreted. The chain is Inactive levansucrase (sacB) from Geobacillus stearothermophilus (Bacillus stearothermophilus).